The chain runs to 174 residues: Acetolactate synthase small subunit (174 aa).

The region spanning 4 to 78 (TLSVLVQDEA…NILNVQDVTN (75 aa)) is the ACT domain.

The protein belongs to the acetolactate synthase small subunit family. In terms of assembly, dimer of large and small chains.

It is found in the plastid. The protein localises to the chloroplast. The catalysed reaction is 2 pyruvate + H(+) = (2S)-2-acetolactate + CO2. The protein operates within amino-acid biosynthesis; L-isoleucine biosynthesis; L-isoleucine from 2-oxobutanoate: step 1/4. Its pathway is amino-acid biosynthesis; L-valine biosynthesis; L-valine from pyruvate: step 1/4. In Pyropia yezoensis (Susabi-nori), this protein is Acetolactate synthase small subunit (ilvH).